The primary structure comprises 509 residues: ATP synthase subunit alpha (509 aa).

169-176 lines the ATP pocket; that stretch reads GDRQTGKT.

This sequence belongs to the ATPase alpha/beta chains family. In terms of assembly, F-type ATPases have 2 components, CF(1) - the catalytic core - and CF(0) - the membrane proton channel. CF(1) has five subunits: alpha(3), beta(3), gamma(1), delta(1), epsilon(1). CF(0) has three main subunits: a(1), b(2) and c(9-12). The alpha and beta chains form an alternating ring which encloses part of the gamma chain. CF(1) is attached to CF(0) by a central stalk formed by the gamma and epsilon chains, while a peripheral stalk is formed by the delta and b chains.

It localises to the cell inner membrane. It catalyses the reaction ATP + H2O + 4 H(+)(in) = ADP + phosphate + 5 H(+)(out). Produces ATP from ADP in the presence of a proton gradient across the membrane. The alpha chain is a regulatory subunit. This is ATP synthase subunit alpha from Methylobacterium nodulans (strain LMG 21967 / CNCM I-2342 / ORS 2060).